Here is a 232-residue protein sequence, read N- to C-terminus: 5'-methylthioadenosine/S-adenosylhomocysteine nucleosidase (232 aa).

Residue E12 is the Proton acceptor of the active site. Residues G78, V153, and 174 to 175 each bind substrate; that span reads ME. The Proton donor role is filled by D198.

It belongs to the PNP/UDP phosphorylase family. MtnN subfamily.

The catalysed reaction is S-adenosyl-L-homocysteine + H2O = S-(5-deoxy-D-ribos-5-yl)-L-homocysteine + adenine. The enzyme catalyses S-methyl-5'-thioadenosine + H2O = 5-(methylsulfanyl)-D-ribose + adenine. It catalyses the reaction 5'-deoxyadenosine + H2O = 5-deoxy-D-ribose + adenine. The protein operates within amino-acid biosynthesis; L-methionine biosynthesis via salvage pathway; S-methyl-5-thio-alpha-D-ribose 1-phosphate from S-methyl-5'-thioadenosine (hydrolase route): step 1/2. Catalyzes the irreversible cleavage of the glycosidic bond in both 5'-methylthioadenosine (MTA) and S-adenosylhomocysteine (SAH/AdoHcy) to adenine and the corresponding thioribose, 5'-methylthioribose and S-ribosylhomocysteine, respectively. Also cleaves 5'-deoxyadenosine, a toxic by-product of radical S-adenosylmethionine (SAM) enzymes, into 5-deoxyribose and adenine. This Photobacterium profundum (strain SS9) protein is 5'-methylthioadenosine/S-adenosylhomocysteine nucleosidase.